The primary structure comprises 311 residues: Forkhead box protein I2 (311 aa).

Residues 99–193 (RPPYSYSALI…DNGNFRRKRR (95 aa)) constitute a DNA-binding region (fork-head). Disordered regions lie at residues 188-237 (FRRK…TTTC) and 263-294 (FSLR…QTGA). The span at 219 to 231 (STPQDPQTSPSPS) shows a compositional bias: low complexity.

The protein localises to the nucleus. Its function is as follows. Possible transcriptional activator. This Mus musculus (Mouse) protein is Forkhead box protein I2.